The following is a 550-amino-acid chain: Alkaline phosphatase PhoV (550 aa).

A signal peptide spans 1–20; the sequence is MKIKLLCISLAVLFCSSANA. The Zn(2+) site is built by Asp48 and Thr89. Residue Thr89 is the Phosphothreonine intermediate of the active site. Substrate contacts are provided by residues Asn110 and 171–173; that span reads KDR. Residues Asp313, His317, Asp360, His361, and His491 each coordinate Zn(2+).

The cofactor is Zn(2+).

It localises to the cell inner membrane. It catalyses the reaction a phosphate monoester + H2O = an alcohol + phosphate. Subject to competitive inhibition by phosphate. Inhibited by manganese. Magnesium mildly increases enzyme activity when the zinc concentration is suboptimal. Optimal activity is dependent on the presence of 0.01-2% Triton X-100. Triton X-100 at a concentration of 0.05% increases the activity about fivefold relative to that in its absence. The enzyme is even active in Triton X-100 concentrations up to 80%. 50% inhibition by 4 mM EDTA and 50% inhibition by 48 mM sodium citrate. Functionally, alkaline phosphatase with broad substrate specificity. This Synechococcus elongatus (strain ATCC 33912 / PCC 7942 / FACHB-805) (Anacystis nidulans R2) protein is Alkaline phosphatase PhoV.